We begin with the raw amino-acid sequence, 218 residues long: Large ribosomal subunit protein uL3 (218 aa).

It belongs to the universal ribosomal protein uL3 family. Part of the 50S ribosomal subunit. Forms a cluster with proteins L14 and L19.

Its function is as follows. One of the primary rRNA binding proteins, it binds directly near the 3'-end of the 23S rRNA, where it nucleates assembly of the 50S subunit. The polypeptide is Large ribosomal subunit protein uL3 (Corynebacterium jeikeium (strain K411)).